Reading from the N-terminus, the 287-residue chain is Alpha-tubulin N-acetyltransferase 2 (287 aa).

Residues 2-193 (VEFAFDIKHL…NNFVLYEGFF (192 aa)) form the N-acetyltransferase domain. Residues 127 to 140 (FYVHESRQRCGQGK) and 163 to 172 (SNKMLAFMAK) each bind acetyl-CoA.

The protein belongs to the acetyltransferase ATAT1 family.

The protein resides in the midbody. It localises to the midbody ring. The catalysed reaction is L-lysyl-[alpha-tubulin] + acetyl-CoA = N(6)-acetyl-L-lysyl-[alpha-tubulin] + CoA + H(+). Functionally, specifically acetylates 'Lys-40' in alpha-tubulin on the lumenal side of microtubules. Promotes microtubule destabilization and accelerates microtubule dynamics; this activity may be independent of acetylation activity. Acetylates alpha-tubulin with a slow enzymatic rate, due to a catalytic site that is not optimized for acetyl transfer. Enters the microtubule through each end and diffuses quickly throughout the lumen of microtubules. Acetylates only long/old microtubules because of its slow acetylation rate since it does not have time to act on dynamically unstable microtubules before the enzyme is released. Main acetyltransferase responsible for alpha-tubulin 'Lys-40' acetylation in germline cells during the early stages of oogenesis. Required for normal egg chamber separation. The chain is Alpha-tubulin N-acetyltransferase 2 from Drosophila melanogaster (Fruit fly).